A 420-amino-acid chain; its full sequence is Histidine--tRNA ligase (420 aa).

It belongs to the class-II aminoacyl-tRNA synthetase family. Homodimer.

The protein resides in the cytoplasm. It catalyses the reaction tRNA(His) + L-histidine + ATP = L-histidyl-tRNA(His) + AMP + diphosphate + H(+). The chain is Histidine--tRNA ligase from Saccharopolyspora erythraea (strain ATCC 11635 / DSM 40517 / JCM 4748 / NBRC 13426 / NCIMB 8594 / NRRL 2338).